We begin with the raw amino-acid sequence, 426 residues long: Ornithine aminotransferase (426 aa).

An N6-(pyridoxal phosphate)lysine modification is found at lysine 291.

The protein belongs to the class-III pyridoxal-phosphate-dependent aminotransferase family. Pyridoxal 5'-phosphate is required as a cofactor.

The enzyme catalyses a 2-oxocarboxylate + L-ornithine = L-glutamate 5-semialdehyde + an L-alpha-amino acid. Its pathway is amino-acid biosynthesis; L-proline biosynthesis; L-glutamate 5-semialdehyde from L-ornithine: step 1/1. This Vigna aconitifolia (Moth bean) protein is Ornithine aminotransferase.